Consider the following 87-residue polypeptide: MSQRNQRKVYVGRVVSDKMDKTITVLVETYKKHPLYGKRVKYSKKYKAHDEHNIAKVGDIVKIMETRPLSATKRFRLVEVIEKAVVL.

It belongs to the universal ribosomal protein uS17 family. In terms of assembly, part of the 30S ribosomal subunit.

In terms of biological role, one of the primary rRNA binding proteins, it binds specifically to the 5'-end of 16S ribosomal RNA. This is Small ribosomal subunit protein uS17 from Geobacillus kaustophilus (strain HTA426).